The sequence spans 1121 residues: Solute carrier family 38 member 10 (1121 aa).

The next 10 membrane-spanning stretches (helical) occupy residues 4–24 (AAASNWGLITNIVNSIVGVSV), 36–58 (IVLGALLLVFCSWMTHQSCMFLV), 84–104 (LVETSMIGLMLGTCIAFYVVI), 120–140 (VGGTFRMFLLFAVSLCIVLPL), 153–173 (FSAMALLFYTVFMFVIVLSSL), 229–249 (IFASSLNVVTTFYVMVGFFGY), 272–292 (MLRVGFMMSVAVGFPMMILPC), 323–343 (ALTLSVVFGTMVGGILIPNVE), 345–365 (ILGLTGATMGSLICFICPALI), and 378–398 (VVLWVGLGILVVSTVTTLSVS). Disordered stretches follow at residues 434 to 691 (VVAV…EEAG), 731 to 904 (KEIH…AATG), and 965 to 1068 (ISDG…ELAP). Composition is skewed to basic and acidic residues over residues 439–454 (EDGREKPKLPKEREEL), 466–475 (PGREDGKEAQ), 493–508 (EAHRHEPPVPHDKVVV), and 544–559 (DSEREKREPEQGEVGK). S612 carries the post-translational modification Phosphoserine. 6 stretches are compositionally biased toward basic and acidic residues: residues 645–659 (DSDHGGKPPLPEEKP), 668–679 (EPREQRDVERAG), 731–752 (KEIHQQRQEDEEDKPRQVEVHP), 763–773 (EAPEGKARETM), 802–811 (SLEHPERPVG), and 863–876 (PAREAGGPEERLAE). A Phosphothreonine modification is found at T772. S802 is subject to Phosphoserine. Phosphoserine is present on residues S890 and S966. Residues 976 to 998 (HRLDHGGYLEMRKEARGGDHMPV) are compositionally biased toward basic and acidic residues. S999 is subject to Phosphoserine. Basic and acidic residues-rich tracts occupy residues 1035–1044 (DNAKPNRDLK) and 1057–1068 (DLGPHAEGELAP).

Belongs to the amino acid/polyamine transporter 2 family.

It is found in the membrane. It catalyses the reaction L-glutamate(out) = L-glutamate(in). The catalysed reaction is L-glutamine(out) = L-glutamine(in). It carries out the reaction L-alanine(in) = L-alanine(out). The enzyme catalyses L-serine(in) = L-serine(out). It catalyses the reaction L-leucine(in) = L-leucine(out). Its function is as follows. Facilitates bidirectional transport of amino acids. May act as a glutamate sensor that regulates glutamate-glutamine cycle and mTOR signaling in the brain. The transport mechanism remains to be elucidated. The sequence is that of Solute carrier family 38 member 10 from Pongo abelii (Sumatran orangutan).